The following is a 332-amino-acid chain: F-box/SPRY domain-containing protein 1 (332 aa).

A compositionally biased stretch (acidic residues) spans 1 to 10; it reads MTENNEETIV. The interval 1 to 81 is disordered; that stretch reads MTENNEETIV…RRSPRRPEVS (81 aa). Polar residues predominate over residues 15 to 24; that stretch reads CNLTSSTPMK. The F-box domain maps to 79–127; the sequence is EVSASRLPLKVLNQIFQYLSLKDLRSAMLTCHSWNNALSMEDSDIWQQL. The B30.2/SPRY domain occupies 138–330; that stretch reads SDPFLFVELR…VTMVYVGSPQ (193 aa).

This sequence belongs to the FBXO45/Fsn family. As to quaternary structure, component of an SCF (SKP1-CUL1-F-box protein) E3 ubiquitin ligase complex composed of cul-1, fsn-1, rpm-1 and skr-1. Interacts (via SPRY domain) with scd-2 (via cytoplasmic domain). Interacts (via SPRY domain) with convertase egl-3 (via C-terminus).

It is found in the synapse. Its pathway is protein modification; protein ubiquitination. In terms of biological role, component of a SCF (SKP1-CUL1-F-box protein) E3 ubiquitin ligase complex which is required for the restriction and/or maturation of synapses in GABAergic neuromuscular junction (NMJ) presynaptic neurons. Promotes NRJ synapse development and synaptic transmission by negatively regulating the daf-2/InsR pathway in muscles. By targeting convertase egl-3 for degradation, negatively modulates insulin-like protein ins-4 and ins-6 processing. May stabilize synapse formation by promoting the down-regulation of scd-2. Regulates axon termination in PLM and ALM neurons. This Caenorhabditis briggsae protein is F-box/SPRY domain-containing protein 1 (fsn-1).